Consider the following 123-residue polypeptide: Small ribosomal subunit protein uS13 (123 aa).

Residues 103–123 (TRTNARTRKGPKKTVGVRRKK) form a disordered region. Residues 105–123 (TNARTRKGPKKTVGVRRKK) show a composition bias toward basic residues.

The protein belongs to the universal ribosomal protein uS13 family. As to quaternary structure, part of the 30S ribosomal subunit. Forms a loose heterodimer with protein S19. Forms two bridges to the 50S subunit in the 70S ribosome.

Functionally, located at the top of the head of the 30S subunit, it contacts several helices of the 16S rRNA. In the 70S ribosome it contacts the 23S rRNA (bridge B1a) and protein L5 of the 50S subunit (bridge B1b), connecting the 2 subunits; these bridges are implicated in subunit movement. Contacts the tRNAs in the A and P-sites. The polypeptide is Small ribosomal subunit protein uS13 (Desulforudis audaxviator (strain MP104C)).